The following is a 174-amino-acid chain: Transcriptional repressor NrdR (174 aa).

The segment at 3-34 (CPFCQHNDTRVIDSRVSEDGTTIRRRRECEAC) is a zinc-finger region. The ATP-cone domain maps to 49 to 139 (PTVVKSDGGR…VYRSFQDVAD (91 aa)).

Belongs to the NrdR family. Requires Zn(2+) as cofactor.

In terms of biological role, negatively regulates transcription of bacterial ribonucleotide reductase nrd genes and operons by binding to NrdR-boxes. In Xanthomonas campestris pv. campestris (strain 8004), this protein is Transcriptional repressor NrdR.